We begin with the raw amino-acid sequence, 402 residues long: Phosphoribulokinase, chloroplastic (402 aa).

The transit peptide at 1–51 (MAVCTVYTIPTTTHLGSSFNQNNKQVFFNYKRSSSSNNTLFTTRPSYVITC) directs the protein to the chloroplast. The cysteines at positions 67 and 106 are disulfide-linked.

This sequence belongs to the phosphoribulokinase family.

The protein localises to the plastid. It is found in the chloroplast. It carries out the reaction D-ribulose 5-phosphate + ATP = D-ribulose 1,5-bisphosphate + ADP + H(+). It participates in carbohydrate biosynthesis; Calvin cycle. With respect to regulation, light regulated via thioredoxin by reversible oxidation/reduction of sulfhydryl/disulfide groups. The protein is Phosphoribulokinase, chloroplastic of Spinacia oleracea (Spinach).